The following is a 490-amino-acid chain: Protein nucleotidyltransferase YdiU (490 aa).

ATP is bound by residues glycine 94, glycine 96, arginine 97, lysine 117, aspartate 129, glycine 130, arginine 180, and arginine 187. The active-site Proton acceptor is the aspartate 256. Mg(2+) is bound by residues asparagine 257 and aspartate 266. Aspartate 266 serves as a coordination point for ATP.

This sequence belongs to the SELO family. Mg(2+) serves as cofactor. The cofactor is Mn(2+).

The enzyme catalyses L-seryl-[protein] + ATP = 3-O-(5'-adenylyl)-L-seryl-[protein] + diphosphate. It carries out the reaction L-threonyl-[protein] + ATP = 3-O-(5'-adenylyl)-L-threonyl-[protein] + diphosphate. It catalyses the reaction L-tyrosyl-[protein] + ATP = O-(5'-adenylyl)-L-tyrosyl-[protein] + diphosphate. The catalysed reaction is L-histidyl-[protein] + UTP = N(tele)-(5'-uridylyl)-L-histidyl-[protein] + diphosphate. The enzyme catalyses L-seryl-[protein] + UTP = O-(5'-uridylyl)-L-seryl-[protein] + diphosphate. It carries out the reaction L-tyrosyl-[protein] + UTP = O-(5'-uridylyl)-L-tyrosyl-[protein] + diphosphate. Its function is as follows. Nucleotidyltransferase involved in the post-translational modification of proteins. It can catalyze the addition of adenosine monophosphate (AMP) or uridine monophosphate (UMP) to a protein, resulting in modifications known as AMPylation and UMPylation. The chain is Protein nucleotidyltransferase YdiU from Clostridium perfringens (strain 13 / Type A).